The primary structure comprises 188 residues: dCTP deaminase (188 aa).

Residues 111–116 (KSTYAR), 135–137 (TLE), Gln-156, Tyr-170, and Gln-180 contribute to the dCTP site. Glu-137 (proton donor/acceptor) is an active-site residue.

This sequence belongs to the dCTP deaminase family. As to quaternary structure, homotrimer.

It carries out the reaction dCTP + H2O + H(+) = dUTP + NH4(+). It participates in pyrimidine metabolism; dUMP biosynthesis; dUMP from dCTP (dUTP route): step 1/2. Functionally, catalyzes the deamination of dCTP to dUTP. This chain is dCTP deaminase, found in Azoarcus sp. (strain BH72).